A 60-amino-acid chain; its full sequence is MISMGDIITYNGCKDNKWMLEQLSTLNFNNLHVWNSCSIGNVTRIFYTFFSYLMKDKLDI.

The protein belongs to the orthopoxvirus OPG069 family. In terms of processing, myristoylated.

Its subcellular location is the host cytoplasm. The protein is Truncated protein OPG069 (OPG069) of Variola virus (isolate Human/India/Ind3/1967) (VARV).